Consider the following 161-residue polypeptide: Putative ecotin-like protein (161 aa).

Residues 1–24 form the signal peptide; sequence MSLRPIETAIASLTMLMLQGCAHA.

The protein belongs to the protease inhibitor I11 (ecotin) family.

The chain is Putative ecotin-like protein from Methylobacillus flagellatus (strain ATCC 51484 / DSM 6875 / VKM B-1610 / KT).